The following is a 232-amino-acid chain: Chaperone protein CssC (232 aa).

Positions M1–E20 are cleaved as a signal peptide.

This sequence belongs to the periplasmic pilus chaperone family.

The protein resides in the periplasm. Involved in the biogenesis of the CS6 fimbria. The sequence is that of Chaperone protein CssC (cssC) from Escherichia coli.